The following is a 158-amino-acid chain: NADH-quinone oxidoreductase subunit B (158 aa).

[4Fe-4S] cluster contacts are provided by cysteine 37, cysteine 38, cysteine 102, and cysteine 132.

It belongs to the complex I 20 kDa subunit family. As to quaternary structure, NDH-1 is composed of 14 different subunits. Subunits NuoB, C, D, E, F, and G constitute the peripheral sector of the complex. It depends on [4Fe-4S] cluster as a cofactor.

It is found in the cell inner membrane. The enzyme catalyses a quinone + NADH + 5 H(+)(in) = a quinol + NAD(+) + 4 H(+)(out). Functionally, NDH-1 shuttles electrons from NADH, via FMN and iron-sulfur (Fe-S) centers, to quinones in the respiratory chain. Couples the redox reaction to proton translocation (for every two electrons transferred, four hydrogen ions are translocated across the cytoplasmic membrane), and thus conserves the redox energy in a proton gradient. This Dechloromonas aromatica (strain RCB) protein is NADH-quinone oxidoreductase subunit B.